Reading from the N-terminus, the 446-residue chain is Glutamyl-tRNA reductase (446 aa).

Residues 49-52 (TCNR), Ser108, 113-115 (ETQ), and Gln119 contribute to the substrate site. Cys50 serves as the catalytic Nucleophile. NADP(+) is bound at residue 188–193 (GAGKMS).

Belongs to the glutamyl-tRNA reductase family. In terms of assembly, homodimer.

The enzyme catalyses (S)-4-amino-5-oxopentanoate + tRNA(Glu) + NADP(+) = L-glutamyl-tRNA(Glu) + NADPH + H(+). It functions in the pathway porphyrin-containing compound metabolism; protoporphyrin-IX biosynthesis; 5-aminolevulinate from L-glutamyl-tRNA(Glu): step 1/2. Its function is as follows. Catalyzes the NADPH-dependent reduction of glutamyl-tRNA(Glu) to glutamate 1-semialdehyde (GSA). This Desulforudis audaxviator (strain MP104C) protein is Glutamyl-tRNA reductase.